The chain runs to 253 residues: Peptidase inhibitor R3HDML (253 aa).

The N-terminal stretch at 1–24 (MPLLPSTVGLAGLLFWAGQAVNAL) is a signal peptide. Positions 25–56 (IMPNATPAPAQPESTAMRLLSGLEVPRYRRKR) are excised as a propeptide. The SCP domain occupies 67–207 (LDYHNHIRAS…HRAAYLVCNY (141 aa)). Asparagine 120 is a glycosylation site (N-linked (GlcNAc...) asparagine).

The protein belongs to the CRISP family.

The protein localises to the secreted. Functionally, putative serine protease inhibitor. This chain is Peptidase inhibitor R3HDML (R3HDML), found in Homo sapiens (Human).